The primary structure comprises 348 residues: Selenide, water dikinase (348 aa).

Selenocysteine 17 is a catalytic residue. Position 17 (selenocysteine 17) is a non-standard amino acid, selenocysteine. ATP-binding positions include lysine 20 and 48–50; that span reads TAD. Aspartate 51 lines the Mg(2+) pocket. ATP is bound by residues aspartate 68, aspartate 91, and 138–140; that span reads GHT. Position 91 (aspartate 91) interacts with Mg(2+). Aspartate 226 lines the Mg(2+) pocket.

The protein belongs to the selenophosphate synthase 1 family. Class I subfamily. As to quaternary structure, homodimer. The cofactor is Mg(2+).

It catalyses the reaction hydrogenselenide + ATP + H2O = selenophosphate + AMP + phosphate + 2 H(+). Synthesizes selenophosphate from selenide and ATP. In Clostridioides difficile (strain 630) (Peptoclostridium difficile), this protein is Selenide, water dikinase.